The primary structure comprises 445 residues: N-succinylarginine dihydrolase (445 aa).

Substrate contacts are provided by residues 19 to 28 (AGLSFGNVAS), asparagine 110, and 137 to 138 (HR). Glutamate 174 is a catalytic residue. Arginine 214 serves as a coordination point for substrate. Histidine 250 is a catalytic residue. Residues aspartate 252 and asparagine 363 each coordinate substrate. The active-site Nucleophile is the cysteine 369.

It belongs to the succinylarginine dihydrolase family. As to quaternary structure, homodimer.

It catalyses the reaction N(2)-succinyl-L-arginine + 2 H2O + 2 H(+) = N(2)-succinyl-L-ornithine + 2 NH4(+) + CO2. It functions in the pathway amino-acid degradation; L-arginine degradation via AST pathway; L-glutamate and succinate from L-arginine: step 2/5. Functionally, catalyzes the hydrolysis of N(2)-succinylarginine into N(2)-succinylornithine, ammonia and CO(2). The sequence is that of N-succinylarginine dihydrolase from Shewanella piezotolerans (strain WP3 / JCM 13877).